We begin with the raw amino-acid sequence, 652 residues long: DNA ligase (652 aa).

NAD(+) is bound by residues 29-33 (DSEYD), 78-79 (SL), and Glu-107. Lys-109 (N6-AMP-lysine intermediate) is an active-site residue. 4 residues coordinate NAD(+): Arg-130, Glu-164, Lys-278, and Lys-302. 4 residues coordinate Zn(2+): Cys-395, Cys-398, Cys-413, and Cys-418. The BRCT domain occupies 577–652 (VADAALSGLT…VRDEAWLESL (76 aa)).

The protein belongs to the NAD-dependent DNA ligase family. LigA subfamily. It depends on Mg(2+) as a cofactor. The cofactor is Mn(2+).

The catalysed reaction is NAD(+) + (deoxyribonucleotide)n-3'-hydroxyl + 5'-phospho-(deoxyribonucleotide)m = (deoxyribonucleotide)n+m + AMP + beta-nicotinamide D-nucleotide.. In terms of biological role, DNA ligase that catalyzes the formation of phosphodiester linkages between 5'-phosphoryl and 3'-hydroxyl groups in double-stranded DNA using NAD as a coenzyme and as the energy source for the reaction. It is essential for DNA replication and repair of damaged DNA. This is DNA ligase from Streptococcus pneumoniae (strain 70585).